A 377-amino-acid chain; its full sequence is tRNA-specific 2-thiouridylase MnmA (377 aa).

ATP-binding positions include 18-25 (AMSGGVDS) and Met44. The active-site Nucleophile is Cys113. A disulfide bridge links Cys113 with Cys210. ATP is bound at residue Gly137. The interval 159 to 161 (RDQ) is interaction with tRNA. Cys210 serves as the catalytic Cysteine persulfide intermediate.

This sequence belongs to the MnmA/TRMU family.

The protein resides in the cytoplasm. The enzyme catalyses S-sulfanyl-L-cysteinyl-[protein] + uridine(34) in tRNA + AH2 + ATP = 2-thiouridine(34) in tRNA + L-cysteinyl-[protein] + A + AMP + diphosphate + H(+). In terms of biological role, catalyzes the 2-thiolation of uridine at the wobble position (U34) of tRNA, leading to the formation of s(2)U34. This is tRNA-specific 2-thiouridylase MnmA from Rhodospirillum rubrum (strain ATCC 11170 / ATH 1.1.1 / DSM 467 / LMG 4362 / NCIMB 8255 / S1).